Reading from the N-terminus, the 478-residue chain is MTLSFVTRWRDELPETYTALSPTPLNNARLIWHNIELANTLSIPSSLFKNGAGVWGGEALLPGMSPLAQVYSGHQFGVWAGQLGDGRGILLGEQLLADGTTMDWHLKGAGLTPYSRMGDGRAVLRSTIRESLASEAMHYLGIPTTRALSIVTSDSPVYRETAEPGAMLMRVAPSHLRFGHFEHFYYRRESEKVRQLADFAIRHYWSHLEDDEDKYRLWFSDVVARTASLIAQWQTVGFAHGVMNTDNMSLLGLTLDYGPFGFLDDYEPGFICNHSDHQGRYSFDNQPAVALWNLQRLAQTLSPFVAVDALNEALDSYQQVLLTHYGQRMRQKLGFMTEQKEDNALLNELFSLMARERSDYTRTFRMLSLTEQHSAASPLRDEFIDRAAFDDWFARYRGRLQQDEVSDSERQQLIQSVNPALVLRNWLAQRAIEAAEKGDMMELHRLHEALRNPFSDRDDDYVSRPPDWGKRLEVSCSS.

Gly84, Gly86, Arg87, Lys107, Asp119, Gly120, Arg170, and Arg177 together coordinate ATP. The Proton acceptor role is filled by Asp246. Mg(2+) is bound by residues Asn247 and Asp256. Asp256 is an ATP binding site.

The protein belongs to the SELO family. Mg(2+) serves as cofactor. The cofactor is Mn(2+).

It catalyses the reaction L-seryl-[protein] + ATP = 3-O-(5'-adenylyl)-L-seryl-[protein] + diphosphate. The enzyme catalyses L-threonyl-[protein] + ATP = 3-O-(5'-adenylyl)-L-threonyl-[protein] + diphosphate. The catalysed reaction is L-tyrosyl-[protein] + ATP = O-(5'-adenylyl)-L-tyrosyl-[protein] + diphosphate. It carries out the reaction L-histidyl-[protein] + UTP = N(tele)-(5'-uridylyl)-L-histidyl-[protein] + diphosphate. It catalyses the reaction L-seryl-[protein] + UTP = O-(5'-uridylyl)-L-seryl-[protein] + diphosphate. The enzyme catalyses L-tyrosyl-[protein] + UTP = O-(5'-uridylyl)-L-tyrosyl-[protein] + diphosphate. In terms of biological role, nucleotidyltransferase involved in the post-translational modification of proteins. It can catalyze the addition of adenosine monophosphate (AMP) or uridine monophosphate (UMP) to a protein, resulting in modifications known as AMPylation and UMPylation. The protein is Protein nucleotidyltransferase YdiU of Shigella boydii serotype 4 (strain Sb227).